The primary structure comprises 591 residues: Metalloendopeptidase OPG085 (591 aa).

His-41 is a binding site for Zn(2+). Glu-44 is a catalytic residue. Zn(2+)-binding residues include His-45 and Glu-112.

It belongs to the peptidase M44 family. The cofactor is Zn(2+). In terms of processing, undergoes proteolytic processing during the course of infection. May be cleaved into 46 kDa and 22 kDa products (Potential).

It localises to the virion. In terms of biological role, probably involved in maturation of some viral proteins by processing them preferentially at Ala-Gly-|-Ser/Thr/Lys motifs. Does not seem to be responsible for the cleavage of major core proteins. This chain is Metalloendopeptidase OPG085 (OPG085), found in Variola virus (isolate Human/India/Ind3/1967) (VARV).